Reading from the N-terminus, the 265-residue chain is Tryptophan synthase alpha chain (265 aa).

Catalysis depends on proton acceptor residues Glu-50 and Asp-61.

Belongs to the TrpA family. In terms of assembly, tetramer of two alpha and two beta chains.

The enzyme catalyses (1S,2R)-1-C-(indol-3-yl)glycerol 3-phosphate + L-serine = D-glyceraldehyde 3-phosphate + L-tryptophan + H2O. It functions in the pathway amino-acid biosynthesis; L-tryptophan biosynthesis; L-tryptophan from chorismate: step 5/5. Its function is as follows. The alpha subunit is responsible for the aldol cleavage of indoleglycerol phosphate to indole and glyceraldehyde 3-phosphate. This Trichodesmium erythraeum (strain IMS101) protein is Tryptophan synthase alpha chain.